A 424-amino-acid chain; its full sequence is Hydrolase ORFZ (424 aa).

Residue Ser-243 is the Nucleophile of the active site.

It belongs to the AB hydrolase superfamily. FUS2 hydrolase family. In terms of assembly, homodimer.

It functions in the pathway secondary metabolite biosynthesis. Hydrolyase; part of the gene cluster that mediates the biosynthesis of a tyrosine-derived cytochalasan acting as a fungal signal recognized by resistant rice plants and leads to avirulence in Pi33 resistant rice cultivars. The first step in the pathway is catalyzed by the hybrid PKS-NRPS ACE1, assisted by the enoyl reductase RAP1, that are responsible for fusion of the tyrosine precursor and the polyketide backbone. The polyketide synthase module (PKS) of ACE1 is responsible for the synthesis of the polyketide backbone and the downstream nonribosomal peptide synthetase (NRPS) amidates the carboxyl end of the polyketide with the tyrosine precursor. Because ACE1 lacks a designated enoylreductase (ER) domain, the required activity is provided the enoyl reductase RAP1. Reduction by the hydrolyase ORFZ, followed by dehydration and intra-molecular Diels-Alder cyclization by the Diels-Alderase ORF3 then yield the required isoindolone-fused macrocycle. A number of oxidative steps catalyzed by the tailoring enzymes identified within the cluster, including cytochrome P450 monooxygenases CYP1 to CYP4, the FAD-linked oxidoreductase OXR2 and the short-chain dehydrogenase/reductase OXR1, are further required to afford the final cytochalasans that confer avirulence and which have still to be identified. The monooxygenase CYP1 has been shown to be a site-selective C-18 hydroxylase whereas the function of CYP3 is the site-selective epoxidation of the C-6/C-7 olefin that is present in some intermediate compounds. Finally, SYN2 and RAP2 are not required for avirulence in Pi33 resistant rice cultivars. This is Hydrolase ORFZ from Pyricularia oryzae (strain 70-15 / ATCC MYA-4617 / FGSC 8958) (Rice blast fungus).